The sequence spans 205 residues: Thiamine-phosphate synthase (205 aa).

Residues 34–38 (QLRCK) and N66 contribute to the 4-amino-2-methyl-5-(diphosphooxymethyl)pyrimidine site. Residues D67 and D86 each contribute to the Mg(2+) site. 4-amino-2-methyl-5-(diphosphooxymethyl)pyrimidine is bound at residue S105. 131–133 (TTT) is a binding site for 2-[(2R,5Z)-2-carboxy-4-methylthiazol-5(2H)-ylidene]ethyl phosphate. Residue K134 coordinates 4-amino-2-methyl-5-(diphosphooxymethyl)pyrimidine. G163 provides a ligand contact to 2-[(2R,5Z)-2-carboxy-4-methylthiazol-5(2H)-ylidene]ethyl phosphate.

This sequence belongs to the thiamine-phosphate synthase family. The cofactor is Mg(2+).

The enzyme catalyses 2-[(2R,5Z)-2-carboxy-4-methylthiazol-5(2H)-ylidene]ethyl phosphate + 4-amino-2-methyl-5-(diphosphooxymethyl)pyrimidine + 2 H(+) = thiamine phosphate + CO2 + diphosphate. The catalysed reaction is 2-(2-carboxy-4-methylthiazol-5-yl)ethyl phosphate + 4-amino-2-methyl-5-(diphosphooxymethyl)pyrimidine + 2 H(+) = thiamine phosphate + CO2 + diphosphate. It catalyses the reaction 4-methyl-5-(2-phosphooxyethyl)-thiazole + 4-amino-2-methyl-5-(diphosphooxymethyl)pyrimidine + H(+) = thiamine phosphate + diphosphate. It functions in the pathway cofactor biosynthesis; thiamine diphosphate biosynthesis; thiamine phosphate from 4-amino-2-methyl-5-diphosphomethylpyrimidine and 4-methyl-5-(2-phosphoethyl)-thiazole: step 1/1. Its function is as follows. Condenses 4-methyl-5-(beta-hydroxyethyl)thiazole monophosphate (THZ-P) and 2-methyl-4-amino-5-hydroxymethyl pyrimidine pyrophosphate (HMP-PP) to form thiamine monophosphate (TMP). This is Thiamine-phosphate synthase from Neisseria meningitidis serogroup A / serotype 4A (strain DSM 15465 / Z2491).